The primary structure comprises 75 residues: uncharacterized protein (75 aa).

A signal peptide spans 1–19 (MQCVCLCVFVLLLAGCVTS).

As to expression, nacreous layer of shell (at protein level).

The protein localises to the secreted. This is an uncharacterized protein from Margaritifera margaritifera (Freshwater pearl mussel).